Consider the following 312-residue polypeptide: MKWSEISIHTKEEAVEAVSHILHEAGASGVAIEDPAELTKEREQQYGEIYALNPDEYPAEGVLIKAYFPQTDSLHETIAGVKSSIDVLPSYDIEIGTGNITVNEVNEEDWATAWKKYYHPVQISDTFTIVPTWEEYTPSSPEEKIIELDPGMAFGTGTHPTTTMCIRALEKTVQQGDTIIDVGTGSGVLSIAAAKLGASSVQAYDLDPVAVESAEMNVRLNKTDDIVSVGQNSLLEGIEGPVDLIVANLLAEIILLFPEDAARVVKSGGLFITSGIIAAKEKVISEALEKAGFTIEEVLRMEDWVAIIARNA.

S-adenosyl-L-methionine-binding residues include threonine 162, glycine 183, aspartate 205, and asparagine 248.

This sequence belongs to the methyltransferase superfamily. PrmA family.

It localises to the cytoplasm. The catalysed reaction is L-lysyl-[protein] + 3 S-adenosyl-L-methionine = N(6),N(6),N(6)-trimethyl-L-lysyl-[protein] + 3 S-adenosyl-L-homocysteine + 3 H(+). Methylates ribosomal protein L11. This Bacillus cereus (strain ATCC 10987 / NRS 248) protein is Ribosomal protein L11 methyltransferase.